Consider the following 243-residue polypeptide: Small ribosomal subunit protein uS2c (243 aa).

The tract at residues 224–243 (GNNGKVSSDQEDTQELQTVQ) is disordered.

Belongs to the universal ribosomal protein uS2 family.

It localises to the plastid. It is found in the chloroplast. This Rhodomonas salina (Cryptomonas salina) protein is Small ribosomal subunit protein uS2c (rps2).